We begin with the raw amino-acid sequence, 74 residues long: Progonadoliberin-3 (74 aa).

The N-terminal stretch at 1 to 15 (VQVVVLALVAQVTLS) is a signal peptide. Gln-16 is modified (pyrrolidone carboxylic acid). Gly-25 bears the Glycine amide mark.

Belongs to the GnRH family.

It is found in the secreted. Its function is as follows. Stimulates the secretion of gonadotropins. The chain is Progonadoliberin-3 (gnrh3) from Oncorhynchus mykiss (Rainbow trout).